Reading from the N-terminus, the 139-residue chain is D-ribose pyranase (139 aa).

His20 functions as the Proton donor in the catalytic mechanism. Residues Asp28, His106, and Tyr128–Asn130 contribute to the substrate site.

This sequence belongs to the RbsD / FucU family. RbsD subfamily. In terms of assembly, homodecamer.

Its subcellular location is the cytoplasm. It carries out the reaction beta-D-ribopyranose = beta-D-ribofuranose. Its pathway is carbohydrate metabolism; D-ribose degradation; D-ribose 5-phosphate from beta-D-ribopyranose: step 1/2. Functionally, catalyzes the interconversion of beta-pyran and beta-furan forms of D-ribose. This chain is D-ribose pyranase, found in Actinobacillus pleuropneumoniae serotype 7 (strain AP76).